Here is a 662-residue protein sequence, read N- to C-terminus: Protein Aster-C (662 aa).

The tract at residues 1-33 (MEGALTARQIVNEGDSSLATELQEEPEESPGPV) is disordered. The region spanning 70–176 (EYRQQFTHLP…LIIFRLWQNV (107 aa)) is the GRAM domain. The disordered stretch occupies residues 212-294 (VEENVQPRSP…EKRISRAPSK (83 aa)). The span at 240-250 (VSFTQESVSRA) shows a compositional bias: polar residues. Basic and acidic residues predominate over residues 265-276 (LGKEDSQSERNV). One can recognise a VASt domain in the interval 326–497 (QGRLYINRVF…DLLMEESVLS (172 aa)). The disordered stretch occupies residues 506–530 (HSSLRRRRRTLNRTAEPVPKLSSQR). Residues 507–516 (SSLRRRRRTL) are compositionally biased toward basic residues. A helical transmembrane segment spans residues 557–577 (LIVVMSIFLLLLVLLNVTLFL).

As to expression, highly expressed in the liver. Also found in the testis.

The protein resides in the endoplasmic reticulum membrane. It localises to the cell membrane. Its function is as follows. Cholesterol transporter that mediates non-vesicular transport of cholesterol from the plasma membrane (PM) to the endoplasmic reticulum (ER). Contains unique domains for binding cholesterol and the PM, thereby serving as a molecular bridge for the transfer of cholesterol from the PM to the ER. Plays a crucial role in cholesterol homeostasis and has the unique ability to localize to the PM based on the level of membrane cholesterol. In lipid-poor conditions localizes to the ER membrane and in response to excess cholesterol in the PM is recruited to the endoplasmic reticulum-plasma membrane contact sites (EPCS) which is mediated by the GRAM domain. At the EPCS, the sterol-binding VASt/ASTER domain binds to the cholesterol in the PM and facilitates its transfer from the PM to ER. This Mus musculus (Mouse) protein is Protein Aster-C (Gramd1c).